The following is a 253-amino-acid chain: MEGKIVIVTGASHGIGLATVNLLLAAGASVFGVDLAPTPPSVTSEKFKFLQLNICDKDAPAKIVLGSKDAFGSDRIDALLNVAGISDYFQTALTFEDDVWDSVIDVNLAAQVRLMREVLKVMKVQKSGSIVNVVSKLALSGACGGVAYVASKHALLGVTKNTAWMFKDDGIRCNAVAPGSTDTNIRNTTDATKIDYDAFTRAMPVIGVHCNLQTGEGMMSPEPAAQAIFFLASDLSKGMNGVVIPVDNAWSVI.

Residues 5–25 (IVIVTGASHGIGLATVNLLLA) traverse the membrane as a helical segment. NADP(+)-binding residues include Val-8, Arg-116, Tyr-148, Lys-152, and Asn-184. Catalysis depends on Tyr-148, which acts as the Proton acceptor. Residue Lys-152 is the Lowers pKa of active site Tyr of the active site. Asn-187 is a glycosylation site (N-linked (GlcNAc...) asparagine).

The protein belongs to the short-chain dehydrogenases/reductases (SDR) family.

It is found in the membrane. The protein operates within secondary metabolite biosynthesis; terpenoid biosynthesis. In terms of biological role, short chain dehydrogenase; part of the gene cluster that mediates the biosynthesis of pleuromutilin, a tricyclic diterpene showing antibacterial properties. The geranylgeranyl diphosphate (GGPP) synthase ple4 catalyzes the first step in pleuromutilin biosynthesis. GGPP is then substrate of the premutilin synthase (PS) ple3 to yield premutilin. Premutilin synthase is a bifunctional enzyme composed of the fusion of a class II diterpene cyclase (DTC) and a class I diterpene synthase (DTS), with the corresponding domains and active sites containing characteristic aspartate-rich motifs. GGPP is first converted to mutildienyl-diphosphate (MPP) at the class II DTC site. MPP is subsequently further cyclized at the class I DTS site, followed by a 1,5-hydride shift and addition of water prior to terminating deprotonation, to yield premutilin. The cytochrome P450 monooxygenases ple5 and ple6 hydroxylate premutilin at C-11 and C-3, respectively, producing 11-hydroxypremutilin and 3-hydroxypremutilin. The combination of the actions of both ple5 and ple6 leads to the production of 3,11-dihydroxypremutilin. The short chain dehydrogenase ple7 further converts 3,11-dihydroxypremutilin into mutilin. The acetyltransferase ple2 then acetylates mutilin to produce 14-O-acetylmutilin. Finally, the cytochrome P450 monooxygenase ple1 catalyzes hydroxylation on the alpha position of the acetyl side chain of 14-O-acetylmutilin to yield pleuromutilin. This Rhodocybe pseudopiperita (Clitopilus pseudopiperitus) protein is Short chain dehydrogenase ple7.